The primary structure comprises 198 residues: Cytochrome c oxidase assembly protein CtaG (198 aa).

Residues 1-12 are Cytoplasmic-facing; that stretch reads MADNGQADRKER. Residues 13–35 traverse the membrane as a helical; Signal-anchor for type II membrane protein segment; sequence SNGVIVGTCLAFVAGMIGMAYAA. Over 36 to 198 the chain is Periplasmic; that stretch reads VPLYDMFCRV…QVKAKAENKL (163 aa).

This sequence belongs to the COX11/CtaG family.

The protein resides in the cell inner membrane. Exerts its effect at some terminal stage of cytochrome c oxidase synthesis, probably by being involved in the insertion of the copper B into subunit I. This is Cytochrome c oxidase assembly protein CtaG from Rhizobium meliloti (strain 1021) (Ensifer meliloti).